The primary structure comprises 391 residues: F-box only protein 5 (391 aa).

One can recognise an F-box domain in the interval 198–245; that stretch reads AELFHRDFKHLLTKILRHLSAMDLINVISVSTTWRKILQKDNSAYNSY. The ZBR-type zinc finger occupies 318-366; sequence CLKVCVDCSSPAKYDPYLHRATCTRESCKFDFCTLCSCKYHGSKCCQTS. Residues Cys-322, Cys-325, Cys-340, Cys-345, Cys-350, Cys-353, His-358, and Cys-363 each contribute to the Zn(2+) site. A disordered region spans residues 365-391; the sequence is TSKPRSYRVPSEPLPGSKKSKQNLRRL. The span at 382 to 391 shows a compositional bias: basic residues; it reads KKSKQNLRRL.

As to quaternary structure, part of a SCF (SKP1-cullin-F-box) protein ligase complex. Interacts with btrc. Interacts with skp1. Interacts with cdc20. Interacts with pin1; stabilizes fbxo5 by preventing its association with btrc in an isomerization-dependent pathway; this interaction is present during G2 phase and prevents fbxo5 degradation. Interacts with plk1. Post-translationally, proteolysed; proteolysis is induced by both cyclin B-cdk1 and cyclin A-cdk1/2 complex through probable phosphorylation. Proteolysis is inhibited by pin1 during G2.

Its subcellular location is the nucleus. The protein localises to the cytoplasm. It is found in the cytoskeleton. It localises to the spindle. The protein resides in the microtubule organizing center. Its subcellular location is the centrosome. The protein operates within protein modification; protein ubiquitination. Regulates progression through early mitosis by inhibiting the anaphase promoting complex/cyclosome (APC). Binds to the APC activators cdc20 to prevent APC activation. Can also bind directly to the APC to inhibit substrate-binding. Required to arrest unfertilized eggs at metaphase of meiosis II, by preventing their release from metaphase of meiosis II, through inhibition of APC-dependent cyclin B destruction leading to stabilization of cyclin B-cdk1 complex activity. This chain is F-box only protein 5, found in Xenopus tropicalis (Western clawed frog).